We begin with the raw amino-acid sequence, 181 residues long: Ubiquitin-conjugating enzyme E2 19 (181 aa).

Over residues 1–10 (MATVNGYTGN) the composition is skewed to polar residues. Residues 1–33 (MATVNGYTGNTPAATTPAATGSKQSAPPTKTVD) are disordered. The segment covering 11-20 (TPAATTPAAT) has biased composition (low complexity). Positions 36 to 181 (SVLKRLQSEL…VEKLYKPLNA (146 aa)) constitute a UBC core domain. Cys120 functions as the Glycyl thioester intermediate in the catalytic mechanism.

The protein belongs to the ubiquitin-conjugating enzyme family. Interacts with OR. Binds to LOT1. As to expression, expressed in all tissues with cell division activities and in mature leaves.

The protein localises to the cytoplasm. It localises to the nucleus. It carries out the reaction S-ubiquitinyl-[E1 ubiquitin-activating enzyme]-L-cysteine + [E2 ubiquitin-conjugating enzyme]-L-cysteine = [E1 ubiquitin-activating enzyme]-L-cysteine + S-ubiquitinyl-[E2 ubiquitin-conjugating enzyme]-L-cysteine.. It functions in the pathway protein modification; protein ubiquitination. Functionally, accepts the ubiquitin from the E1 complex and catalyzes its covalent attachment to other proteins. Part of the anaphase-promoting complex (APC). May have a key function during cell cycle and be involved in cyclin B1 degradation. Triggers OR ubiquitination that mediates its subsequent nuclear localization. Involved in the repression of early light-induced proteins (ELIPs, e.g. ELIP1 and ELIP2) expression, probably via OR nuclear relocalization. This is Ubiquitin-conjugating enzyme E2 19 from Arabidopsis thaliana (Mouse-ear cress).